A 468-amino-acid polypeptide reads, in one-letter code: Maltose fermentation regulatory protein MAL33 (468 aa).

The zn(2)-C6 fungal-type DNA-binding region spans 8 to 34 (CDYCRVRRVKCDGKKPCSRCIEHNFDC). Residues 41-49 (KKRGSKPIG) carry the Nuclear localization signal motif.

This sequence belongs to the MAL13 family.

It is found in the nucleus. Regulates the coordinate transcription of structural MAL3S (maltase) and MAL3T (maltose permease) genes. This Saccharomyces cerevisiae (strain ATCC 204508 / S288c) (Baker's yeast) protein is Maltose fermentation regulatory protein MAL33 (MAL33).